Reading from the N-terminus, the 403-residue chain is Chalcone synthase 2 (403 aa).

A CoA-binding site is contributed by 59-66 (RFQRMCES). The Acyl-thioester intermediate role is filled by cysteine 168. 220 to 221 (GD) lines the substrate pocket. CoA is bound at residue alanine 313.

The protein belongs to the thiolase-like superfamily. Chalcone/stilbene synthases family. Homodimer.

The catalysed reaction is (E)-4-coumaroyl-CoA + 3 malonyl-CoA + 3 H(+) = 2',4,4',6'-tetrahydroxychalcone + 3 CO2 + 4 CoA. The protein operates within secondary metabolite biosynthesis; flavonoid biosynthesis. The primary product of this enzyme is 4,2',4',6'-tetrahydroxychalcone (also termed naringenin-chalcone or chalcone) which can under specific conditions spontaneously isomerize into naringenin. This Oryza sativa subsp. japonica (Rice) protein is Chalcone synthase 2 (CHS2).